Reading from the N-terminus, the 348-residue chain is Lipopolysaccharide heptosyltransferase 2 (348 aa).

The protein belongs to the glycosyltransferase 9 family.

The enzyme catalyses an L-alpha-D-Hep-(1-&gt;5)-[alpha-Kdo-(2-&gt;4)]-alpha-Kdo-(2-&gt;6)-lipid A + ADP-L-glycero-beta-D-manno-heptose = an L-alpha-D-Hep-(1-&gt;3)-L-alpha-D-Hep-(1-&gt;5)-[alpha-Kdo-(2-&gt;4)]-alpha-Kdo-(2-&gt;6)-lipid A + ADP + H(+). It functions in the pathway bacterial outer membrane biogenesis; LPS core biosynthesis. In terms of biological role, glycosyltransferase involved in the biosynthesis of the core oligosaccharide region of lipopolysaccharide (LPS). Catalyzes the addition of the second heptose unit to the heptosyl-Kdo2-lipid A module. This is Lipopolysaccharide heptosyltransferase 2 from Salmonella typhimurium (strain LT2 / SGSC1412 / ATCC 700720).